The following is a 274-amino-acid chain: NH(3)-dependent NAD(+) synthetase (274 aa).

Position 46–53 (G46–S53) interacts with ATP. D52 lines the Mg(2+) pocket. R140 lines the deamido-NAD(+) pocket. T160 contacts ATP. E165 is a binding site for Mg(2+). Deamido-NAD(+) contacts are provided by K173 and D180. ATP-binding residues include K189 and T211. H260 to K261 provides a ligand contact to deamido-NAD(+).

This sequence belongs to the NAD synthetase family. As to quaternary structure, homodimer.

It catalyses the reaction deamido-NAD(+) + NH4(+) + ATP = AMP + diphosphate + NAD(+) + H(+). The protein operates within cofactor biosynthesis; NAD(+) biosynthesis; NAD(+) from deamido-NAD(+) (ammonia route): step 1/1. Its function is as follows. Catalyzes the ATP-dependent amidation of deamido-NAD to form NAD. Uses ammonia as a nitrogen source. The sequence is that of NH(3)-dependent NAD(+) synthetase from Lactococcus lactis subsp. cremoris (strain MG1363).